Consider the following 715-residue polypeptide: uncharacterized protein (715 aa).

A helical transmembrane segment spans residues 688–708; sequence VWKFNPALYSTITNIFLLIIF.

Belongs to the plectrovirus ORF1 family.

It localises to the host membrane. This is an uncharacterized protein from Spiroplasma virus SpV1-R8A2 B (SpV1).